We begin with the raw amino-acid sequence, 55 residues long: Neurotoxin B-II (55 aa).

P10 carries the post-translational modification Hydroxyproline. 4 disulfide bridges follow: C12-C48, C16-C52, C23-C41, and C26-C37.

The protein belongs to the worm B-toxin family.

It localises to the secreted. Functionally, this toxin increases the excitability of nerves by delaying the inactivation of the voltage-gated sodium channel (Nav). Only acts on some crustacean. Neurotoxin B-II is less abundant, but 15-fold more toxic than neurotoxin B-VI. The chain is Neurotoxin B-II from Cerebratulus lacteus (Milky ribbon worm).